The primary structure comprises 412 residues: Serine hydroxymethyltransferase (412 aa).

(6S)-5,6,7,8-tetrahydrofolate contacts are provided by residues L117 and 121 to 123 (GHL). K226 carries the N6-(pyridoxal phosphate)lysine modification. 349–351 (SPF) serves as a coordination point for (6S)-5,6,7,8-tetrahydrofolate.

The protein belongs to the SHMT family. In terms of assembly, homodimer. Pyridoxal 5'-phosphate is required as a cofactor.

It localises to the cytoplasm. It catalyses the reaction (6R)-5,10-methylene-5,6,7,8-tetrahydrofolate + glycine + H2O = (6S)-5,6,7,8-tetrahydrofolate + L-serine. Its pathway is one-carbon metabolism; tetrahydrofolate interconversion. It participates in amino-acid biosynthesis; glycine biosynthesis; glycine from L-serine: step 1/1. Its function is as follows. Catalyzes the reversible interconversion of serine and glycine with tetrahydrofolate (THF) serving as the one-carbon carrier. This reaction serves as the major source of one-carbon groups required for the biosynthesis of purines, thymidylate, methionine, and other important biomolecules. Also exhibits THF-independent aldolase activity toward beta-hydroxyamino acids, producing glycine and aldehydes, via a retro-aldol mechanism. The polypeptide is Serine hydroxymethyltransferase (Nitratidesulfovibrio vulgaris (strain DSM 19637 / Miyazaki F) (Desulfovibrio vulgaris)).